The sequence spans 89 residues: Small ribosomal subunit protein uS15 (89 aa).

It belongs to the universal ribosomal protein uS15 family. Part of the 30S ribosomal subunit. Forms a bridge to the 50S subunit in the 70S ribosome, contacting the 23S rRNA.

One of the primary rRNA binding proteins, it binds directly to 16S rRNA where it helps nucleate assembly of the platform of the 30S subunit by binding and bridging several RNA helices of the 16S rRNA. In terms of biological role, forms an intersubunit bridge (bridge B4) with the 23S rRNA of the 50S subunit in the ribosome. This is Small ribosomal subunit protein uS15 from Shewanella putrefaciens (strain CN-32 / ATCC BAA-453).